An 80-amino-acid chain; its full sequence is Exodeoxyribonuclease 7 small subunit (80 aa).

The protein belongs to the XseB family. In terms of assembly, heterooligomer composed of large and small subunits.

It is found in the cytoplasm. The catalysed reaction is Exonucleolytic cleavage in either 5'- to 3'- or 3'- to 5'-direction to yield nucleoside 5'-phosphates.. Its function is as follows. Bidirectionally degrades single-stranded DNA into large acid-insoluble oligonucleotides, which are then degraded further into small acid-soluble oligonucleotides. This chain is Exodeoxyribonuclease 7 small subunit, found in Maridesulfovibrio salexigens (strain ATCC 14822 / DSM 2638 / NCIMB 8403 / VKM B-1763) (Desulfovibrio salexigens).